The sequence spans 438 residues: L-fucose-proton symporter (438 aa).

Residues 2–26 (GNTSIQTQSYRAVDKDAGQSRSYII) lie on the Cytoplasmic side of the membrane. A helical transmembrane segment spans residues 27-53 (PFALLCSLFFLWAVANNLNDILLPQFQ). Topologically, residues 54-61 (QAFTLTNF) are periplasmic. The helical transmembrane segment at 62–87 (QAGLIQSAFYFGYFIIPIPAGILMKK) threads the bilayer. Residues 88 to 90 (LSY) lie on the Cytoplasmic side of the membrane. Residues 91-113 (KAGIITGLFLYALGAALFWPAAE) traverse the membrane as a helical segment. At 114–117 (IMNY) the chain is on the periplasmic side. The chain crosses the membrane as a helical span at residues 118 to 144 (TLFLVGLFIIAAGLGCLETAANPFVTV). Residues 145–150 (LGPESS) are Cytoplasmic-facing. The chain crosses the membrane as a helical span at residues 151–178 (GHFRLNLAQTFNSFGAIIAVVFGQSLIL). Residues 179 to 193 (SNVPHQSQDVLDKMS) lie on the Periplasmic side of the membrane. The helical transmembrane segment at 194-227 (PEQLSAYKHSLVLSVQTPYMIIVAIVLLVALLIM) threads the bilayer. Topologically, residues 228-257 (LTKFPALQSDNHSDAKQGSFSASLSRLARI) are cytoplasmic. The helical transmembrane segment at 258–287 (RHWRWAVLAQFCYVGAQTACWSYLIRYAVE) threads the bilayer. The Periplasmic portion of the chain corresponds to 288 to 293 (EIPGMT). Residues 294 to 319 (AGFAANYLTGTMVCFFIGRFTGTWLI) form a helical membrane-spanning segment. Residues 320-324 (SRFAP) are Cytoplasmic-facing. A helical membrane pass occupies residues 325–343 (HKVLAAYALIAMALCLISA). At 344 to 347 (FAGG) the chain is on the periplasmic side. Residues 348–372 (HVGLIALTLCSAFMSIQYPTIFSLG) traverse the membrane as a helical segment. Over 373–379 (IKNLGQD) the chain is Cytoplasmic. Residues 380 to 407 (TKYGSSFIVMTIIGGGIVTPVMGFVSDA) form a helical membrane-spanning segment. Residues 408-410 (AGN) lie on the Periplasmic side of the membrane. The helical transmembrane segment at 411–430 (IPTAELIPALCFAVIFIFAR) threads the bilayer. The Cytoplasmic portion of the chain corresponds to 431–438 (FRSQTATN).

Belongs to the major facilitator superfamily. FHS transporter (TC 2.A.1.7) family.

The protein localises to the cell inner membrane. It catalyses the reaction L-fucose(in) + H(+)(in) = L-fucose(out) + H(+)(out). It carries out the reaction D-arabinose(out) + H(+)(out) = D-arabinose(in) + H(+)(in). The enzyme catalyses L-galactose(out) + H(+)(out) = L-galactose(in) + H(+)(in). Its function is as follows. Mediates the uptake of L-fucose across the boundary membrane with the concomitant transport of protons into the cell (symport system). Can also transport L-galactose and D-arabinose, but at reduced rates compared with L-fucose. Is not able to transport L-rhamnose and L-arabinose. Binds D-arabinose with the highest affinity, followed by L-fucose, and then by L-galactose. The protein is L-fucose-proton symporter (fucP) of Escherichia coli (strain K12).